The sequence spans 119 residues: Ribonuclease P protein component (119 aa).

The protein belongs to the RnpA family. As to quaternary structure, consists of a catalytic RNA component (M1 or rnpB) and a protein subunit.

The enzyme catalyses Endonucleolytic cleavage of RNA, removing 5'-extranucleotides from tRNA precursor.. In terms of biological role, RNaseP catalyzes the removal of the 5'-leader sequence from pre-tRNA to produce the mature 5'-terminus. It can also cleave other RNA substrates such as 4.5S RNA. The protein component plays an auxiliary but essential role in vivo by binding to the 5'-leader sequence and broadening the substrate specificity of the ribozyme. This is Ribonuclease P protein component from Bacillus cereus (strain ZK / E33L).